The following is a 298-amino-acid chain: GTPase Era (298 aa).

The region spanning 8 to 176 (HCGSVAVIGR…VRDVLKLLPE (169 aa)) is the Era-type G domain. The tract at residues 16 to 23 (GRPNVGKS) is G1. Residue 16–23 (GRPNVGKS) participates in GTP binding. A G2 region spans residues 42–46 (QTTRH). The interval 63–66 (DTPG) is G3. GTP-binding positions include 63–67 (DTPGL) and 125–128 (NKID). The tract at residues 125 to 128 (NKID) is G4. The tract at residues 155–157 (ISA) is G5. A KH type-2 domain is found at 199 to 283 (VREQLMRQLG…FLETWVRVRE (85 aa)).

The protein belongs to the TRAFAC class TrmE-Era-EngA-EngB-Septin-like GTPase superfamily. Era GTPase family. Monomer.

Its subcellular location is the cytoplasm. It localises to the cell inner membrane. An essential GTPase that binds both GDP and GTP, with rapid nucleotide exchange. Plays a role in 16S rRNA processing and 30S ribosomal subunit biogenesis and possibly also in cell cycle regulation and energy metabolism. This chain is GTPase Era, found in Stenotrophomonas maltophilia (strain K279a).